A 3114-amino-acid chain; its full sequence is Centromere protein F (3114 aa).

The segment at 1-481 (MSWALEEWKE…IKENELRRSM (481 aa)) is interaction with SNAP25 and required for localization to the cytoplasm. Positions 13–131 (PTRALQKIQE…KSELERSQQA (119 aa)) form a coiled coil. At serine 106 the chain carries Phosphoserine. Threonine 144, threonine 151, and threonine 154 each carry phosphothreonine. Residue tyrosine 158 is modified to Phosphotyrosine. Residues 211–235 (QASSSVFSWQQEKTPSHLSSNSQRT) are compositionally biased toward polar residues. Residues 211-236 (QASSSVFSWQQEKTPSHLSSNSQRTP) form a disordered region. Serine 242 and serine 276 each carry phosphoserine. Positions 280 to 685 (LDQLKAQNQE…SVEIRNLHNV (406 aa)) form a coiled coil. Residues serine 773, serine 783, serine 821, serine 834, serine 838, and serine 876 each carry the phosphoserine modification. 2 coiled-coil regions span residues 899 to 989 (VAET…LNQE) and 1196 to 1244 (LEVK…IRGD). 3 positions are modified to phosphoserine: serine 1248, serine 1255, and serine 1259. Residues 1549–1646 (VEELESLCEV…ELEVARLQLQ (98 aa)) are a coiled coil. Phosphoserine is present on residues serine 1651, serine 1652, and serine 1654. Disordered regions lie at residues 1667-1690 (RNESCDISKEHTSETTERTPKHDV) and 1710-1746 (TETGAVKPTGECSGEQSPDTNYEPPGEDKTQGSSECI). The span at 1669-1690 (ESCDISKEHTSETTERTPKHDV) shows a compositional bias: basic and acidic residues. Residue serine 1726 is modified to Phosphoserine. A Phosphothreonine modification is found at threonine 1862. Phosphoserine occurs at positions 1868 and 1892. Coiled coils occupy residues 1890 to 2078 (NDSW…LQAR) and 2107 to 2891 (LSST…LCSQ). Positions 2026–2351 (LLKDKTHLQE…ERELEIARTN (326 aa)) are interaction with NDE1 and NDEL1. 2 repeat units span residues 2111–2290 (QEEV…QSLD) and 2293–2472 (IEEE…QNLS). The tract at residues 2111-2472 (QEEVHQLRRG…ACKAKEQNLS (362 aa)) is 2 X 177 AA tandem repeats. The tract at residues 2392 to 2829 (SEKENLTNEL…QAAQEKQKTG (438 aa)) is sufficient for self-association. The tract at residues 2392–3017 (SEKENLTNEL…ATRTSPRLAA (626 aa)) is sufficient for centromere localization. A phosphoserine mark is found at serine 2416 and serine 2417. Lysine 2779 carries the N6-acetyllysine modification. Residues 2831-3017 (VMDTKVDELT…ATRTSPRLAA (187 aa)) form a sufficient for nuclear localization region. Residues 2891-2977 (QQSKQDSRGS…AEDTEGTEFE (87 aa)) are disordered. Residues serine 2900, serine 2911, serine 2922, and serine 2936 each carry the phosphoserine modification. Residues 2919–2936 (KRLSSGQNKASGKRQRSS) carry the Nuclear localization signal motif. The residue at position 2949 (threonine 2949) is a Phosphothreonine. Residues serine 2952, serine 2998, serine 3023, and serine 3026 each carry the phosphoserine modification. Residues 3024–3114 (PLSLGKENLA…SNGSENCKVQ (91 aa)) form a disordered region. Residues 3033–3045 (AESSKPTAGGSRS) are compositionally biased toward polar residues. Residues serine 3054, serine 3079, and serine 3083 each carry the phosphoserine modification. The segment covering 3079 to 3089 (SPTDSPREGLR) has biased composition (basic and acidic residues). Positions 3105–3114 (SNGSENCKVQ) are enriched in polar residues. Cysteine 3111 is modified (cysteine methyl ester). Cysteine 3111 is lipidated: S-farnesyl cysteine. The propeptide at 3112–3114 (KVQ) is removed in mature form.

This sequence belongs to the centromere protein F family. Interacts with and STX4 (via C-terminus). Interacts (via N-terminus) with RBL1, RBL2 and SNAP25. Self-associates. Interacts with CENP-E and BUBR1 (via C-terminus). Interacts (via C-terminus) with NDE1, NDEL1 and RB1. In terms of processing, hyperphosphorylated during mitosis.

Its subcellular location is the cytoplasm. The protein resides in the perinuclear region. It localises to the nucleus matrix. It is found in the chromosome. The protein localises to the centromere. Its subcellular location is the kinetochore. The protein resides in the cytoskeleton. It localises to the spindle. Functionally, required for kinetochore function and chromosome segregation in mitosis. Required for kinetochore localization of dynein, LIS1, NDE1 and NDEL1. Regulates recycling of the plasma membrane by acting as a link between recycling vesicles and the microtubule network though its association with STX4 and SNAP25. Acts as a potential inhibitor of pocket protein-mediated cellular processes during development by regulating the activity of RB proteins during cell division and proliferation. May play a regulatory or permissive role in the normal embryonic cardiomyocyte cell cycle and in promoting continued mitosis in transformed, abnormally dividing neonatal cardiomyocytes. Interaction with RB directs embryonic stem cells toward a cardiac lineage. Involved in the regulation of DNA synthesis and hence cell cycle progression, via its C-terminus. Has a potential role regulating skeletal myogenesis and in cell differentiation in embryogenesis. Involved in dendritic cell regulation of T-cell immunity against chlamydia. The polypeptide is Centromere protein F (CENPF) (Homo sapiens (Human)).